The chain runs to 205 residues: GTP cyclohydrolase-2 (205 aa).

49–53 contacts GTP; the sequence is RLHSE. Cysteine 54, cysteine 65, and cysteine 67 together coordinate Zn(2+). GTP-binding positions include glutamine 70, 92 to 94, and threonine 114; that span reads EGR. The active-site Proton acceptor is the aspartate 126. Arginine 128 functions as the Nucleophile in the catalytic mechanism. The GTP site is built by threonine 149 and lysine 154.

Belongs to the GTP cyclohydrolase II family. The cofactor is Zn(2+).

The enzyme catalyses GTP + 4 H2O = 2,5-diamino-6-hydroxy-4-(5-phosphoribosylamino)-pyrimidine + formate + 2 phosphate + 3 H(+). It functions in the pathway cofactor biosynthesis; riboflavin biosynthesis; 5-amino-6-(D-ribitylamino)uracil from GTP: step 1/4. Catalyzes the conversion of GTP to 2,5-diamino-6-ribosylamino-4(3H)-pyrimidinone 5'-phosphate (DARP), formate and pyrophosphate. The protein is GTP cyclohydrolase-2 of Pseudomonas putida (strain GB-1).